Reading from the N-terminus, the 561-residue chain is Urocanate hydratase (561 aa).

Residues 52–53, Q130, 176–178, E196, R201, 242–243, 263–267, 273–274, and Y322 contribute to the NAD(+) site; these read GG, GMG, NA, QTSAH, and YL. Residue C410 is part of the active site. G492 lines the NAD(+) pocket.

Belongs to the urocanase family. NAD(+) serves as cofactor.

It localises to the cytoplasm. It carries out the reaction 4-imidazolone-5-propanoate = trans-urocanate + H2O. The protein operates within amino-acid degradation; L-histidine degradation into L-glutamate; N-formimidoyl-L-glutamate from L-histidine: step 2/3. Functionally, catalyzes the conversion of urocanate to 4-imidazolone-5-propionate. The protein is Urocanate hydratase of Salmonella gallinarum (strain 287/91 / NCTC 13346).